A 319-amino-acid polypeptide reads, in one-letter code: G-protein coupled receptor 171 (319 aa).

Over 1–21 the chain is Extracellular; sequence MTNSSTFCPVYRDLEPFTYFF. Asparagine 3 carries N-linked (GlcNAc...) asparagine glycosylation. Residues 22-42 traverse the membrane as a helical segment; sequence YLVFLIGIIGSCFATWAFIQK. The Cytoplasmic segment spans residues 43–48; sequence TTNHRC. A helical membrane pass occupies residues 49-69; the sequence is VSIYLINLLTADFLLTLALPV. Residues 70-89 are Extracellular-facing; the sequence is KIIVDLGVAPWKLRIFHCQV. The helical transmembrane segment at 90 to 110 threads the bilayer; it reads TACLIYINMYLSIIFLAFVSI. Residues 111–132 lie on the Cytoplasmic side of the membrane; the sequence is DRCLQLIHSCKIYRIQEPGFAK. Residues 133-153 traverse the membrane as a helical segment; it reads MISAVVWLMVLLIMVPNMVIP. Residues 154–181 lie on the Extracellular side of the membrane; the sequence is IKDIKEKSNVGCMEFKKEFGRNWHLLTN. The helical transmembrane segment at 182–202 threads the bilayer; the sequence is FICVAIFLNFSVIILISNFLA. The Cytoplasmic segment spans residues 203 to 224; that stretch reads IRQLYRNRDNTNYPSVKSALLH. Residues 225 to 245 traverse the membrane as a helical segment; it reads ILLVTASYIICFVPYHAVRIP. Over 246 to 268 the chain is Extracellular; sequence YTLSQTEVISDCSTRIALFKAKE. Residues 269–289 traverse the membrane as a helical segment; sequence ATLLLAVSNLCFDPILYYHLS. The Cytoplasmic portion of the chain corresponds to 290-319; it reads KAFRLKVTETFASPKKSKPLEERLRSENDV.

Belongs to the G-protein coupled receptor 1 family. In terms of tissue distribution, highly expressed in hypothalamus, including the arcuate nucleus, paraventricular nucleus and dorsomedial hypothalamus. Expressed in periaqueductal gray (at protein level), found primarily in GABAergic neurons and to a lesser extent in glutamatergic neurons. Expressed in T cells and natural killer cells.

It localises to the cell membrane. Its function is as follows. G-protein coupled receptor for Big LEN, a 16-amino acid neuropeptide produced from the precursor protein, proSAAS (encoded by PCSK1N). Acts through a G(i)-alpha-mediated pathway in response to Big LEN. Big LEN-GPR171 system plays an important role in regulating feeding and metabolism. Also plays a role in modulating fear and anxiety-like behaviors in the basolateral amygdala. Big LEN-GPR171 modulates the mu-type opioid receptor signaling and antinociception. Acts as a negative regulator T cell function. This is G-protein coupled receptor 171 (Gpr171) from Mus musculus (Mouse).